The sequence spans 408 residues: UPF0761 membrane protein NMCC_0461 (408 aa).

A run of 6 helical transmembrane segments spans residues 43-63 (LLAL…FPVF), 100-120 (LTAI…RTID), 139-159 (FLVY…GISF), 176-196 (WSGA…LWGL), 210-230 (AFVG…LFTW), and 248-268 (VPFF…GAVL).

Belongs to the UPF0761 family.

The protein localises to the cell inner membrane. In Neisseria meningitidis serogroup C (strain 053442), this protein is UPF0761 membrane protein NMCC_0461.